Here is a 196-residue protein sequence, read N- to C-terminus: UPF0134 protein MPN_501 (196 aa).

The protein belongs to the UPF0134 family.

The protein is UPF0134 protein MPN_501 of Mycoplasma pneumoniae (strain ATCC 29342 / M129 / Subtype 1) (Mycoplasmoides pneumoniae).